We begin with the raw amino-acid sequence, 472 residues long: Zinc finger imprinted 3 (472 aa).

The region spanning 8-80 (VTFEDVTVNF…EEEVLGSGRA (73 aa)) is the KRAB domain. 11 C2H2-type zinc fingers span residues 167-189 (LKCN…LRRH), 195-217 (FECH…QKTH), 223-245 (YKCE…QKMH), 251-273 (YQCK…EKIH), 279-301 (YQCN…KKVH), 307-329 (FQCT…QRIH), 335-357 (YKCS…EKIH), 363-385 (YECD…KKIH), 391-413 (YECN…QKTH), 419-441 (YRCS…KKTH), and 447-470 (YGCS…KRIH).

It belongs to the krueppel C2H2-type zinc-finger protein family.

The protein resides in the nucleus. Functionally, may be involved in transcriptional regulation. The chain is Zinc finger imprinted 3 (ZIM3) from Homo sapiens (Human).